Reading from the N-terminus, the 150-residue chain is 3-dehydroquinate dehydratase (150 aa).

The active-site Proton acceptor is the Tyr26. The substrate site is built by Asn77, His83, and Asp90. His103 serves as the catalytic Proton donor. Residues 104-105 (LS) and Arg114 contribute to the substrate site.

The protein belongs to the type-II 3-dehydroquinase family. As to quaternary structure, homododecamer.

The catalysed reaction is 3-dehydroquinate = 3-dehydroshikimate + H2O. It participates in metabolic intermediate biosynthesis; chorismate biosynthesis; chorismate from D-erythrose 4-phosphate and phosphoenolpyruvate: step 3/7. In terms of biological role, catalyzes a trans-dehydration via an enolate intermediate. The polypeptide is 3-dehydroquinate dehydratase (Histophilus somni (strain 129Pt) (Haemophilus somnus)).